Consider the following 199-residue polypeptide: uncharacterized protein (199 aa).

A run of 7 helical transmembrane segments spans residues 10 to 32 (LTSQ…FIGY), 37 to 59 (VYSA…INYY), 63 to 80 (LIVI…FALI), 83 to 100 (LGLI…GVYL), 104 to 121 (YQVY…INLF), 126 to 148 (LTVL…MGIT), and 163 to 185 (FDAI…TGII).

The protein localises to the cell membrane. This is an uncharacterized protein from Archaeoglobus fulgidus (strain ATCC 49558 / DSM 4304 / JCM 9628 / NBRC 100126 / VC-16).